We begin with the raw amino-acid sequence, 436 residues long: Aminopeptidase C (436 aa).

Active-site residues include Cys68, His356, and Asn378.

This sequence belongs to the peptidase C1 family. As to quaternary structure, homohexamer.

The enzyme catalyses Inactivates bleomycin B2 (a cytotoxic glycometallopeptide) by hydrolysis of a carboxyamide bond of beta-aminoalanine, but also shows general aminopeptidase activity. The specificity varies somewhat with source, but amino acid arylamides of Met, Leu and Ala are preferred.. In terms of biological role, hydrolyzes naphthylamide-substituted amino acids as well as di- and tripeptides in which the half-cystine residue is involved in a disulfide loop, notably in oxytocin and vasopressin. Also has a bleomycin hydrolase activity. The sequence is that of Aminopeptidase C (pepC) from Lactococcus lactis subsp. cremoris (Streptococcus cremoris).